The sequence spans 354 residues: UDP-3-O-acylglucosamine N-acyltransferase (354 aa).

His-257 serves as the catalytic Proton acceptor.

This sequence belongs to the transferase hexapeptide repeat family. LpxD subfamily. Homotrimer.

It catalyses the reaction a UDP-3-O-[(3R)-3-hydroxyacyl]-alpha-D-glucosamine + a (3R)-hydroxyacyl-[ACP] = a UDP-2-N,3-O-bis[(3R)-3-hydroxyacyl]-alpha-D-glucosamine + holo-[ACP] + H(+). The protein operates within bacterial outer membrane biogenesis; LPS lipid A biosynthesis. In terms of biological role, catalyzes the N-acylation of UDP-3-O-acylglucosamine using 3-hydroxyacyl-ACP as the acyl donor. Is involved in the biosynthesis of lipid A, a phosphorylated glycolipid that anchors the lipopolysaccharide to the outer membrane of the cell. In Rhizobium johnstonii (strain DSM 114642 / LMG 32736 / 3841) (Rhizobium leguminosarum bv. viciae), this protein is UDP-3-O-acylglucosamine N-acyltransferase.